Reading from the N-terminus, the 357-residue chain is Protein ORF58 (357 aa).

Transmembrane regions (helical) follow at residues 20–40 (LAAT…FTLF), 44–64 (ITAV…CMCL), 78–98 (WICA…GFTF), 101–121 (VPFI…YPLA), 132–152 (IVHR…YLLL), 157–177 (FVSG…LLAF), 219–239 (VVVF…IGLL), 242–262 (VLIG…SCVG), 270–290 (ALFV…ILGS), 300–320 (CLCC…IQLI), and 333–353 (MVLA…SVIN).

The protein belongs to the herpesviridae BMRF2 family.

The protein resides in the virion membrane. Its subcellular location is the host cell membrane. Its function is as follows. Participates in rearrangement of cellular actin to increase intercellular contacts and thereby promotes virus cell-to-cell spreadin$g. This chain is Protein ORF58 (ORF58), found in Homo sapiens (Human).